We begin with the raw amino-acid sequence, 214 residues long: uncharacterized protein (214 aa).

5 consecutive transmembrane segments (helical) span residues 18–38 (LLLL…NTFV), 51–71 (DLAL…IVAG), 80–100 (ILVL…VLLV), 108–128 (LLVL…AFNV), and 145–165 (FFGV…GYII).

Its subcellular location is the cell membrane. This is an uncharacterized protein from Geobacillus stearothermophilus (Bacillus stearothermophilus).